Consider the following 227-residue polypeptide: MICOS complex subunit MIC19 (227 aa).

A lipid anchor (N-myristoyl glycine) is attached at glycine 2. Serine 29 is modified (phosphoserine). Disordered regions lie at residues 34–61 and 73–92; these read DRMK…SDEE and EQAK…KELD. Residues 39–49 are compositionally biased toward polar residues; sequence SSPSGSKSQRY. Tyrosine 49 carries the post-translational modification Phosphotyrosine. Phosphoserine occurs at positions 50, 56, and 58. The residue at position 142 (lysine 142) is an N6-acetyllysine. One can recognise a CHCH domain in the interval 180-222; the sequence is HPVCADLQAKILQCYRENTHQTLKCSALATQYMHCVNHAKQSM. 2 short sequence motifs (cx9C motif) span residues 183-193 and 204-214; these read CADLQAKILQC and CSALATQYMHC. 2 disulfides stabilise this stretch: cysteine 183-cysteine 214 and cysteine 193-cysteine 204.

This sequence belongs to the MICOS complex subunit Mic19 family. Metazoan Mic19 subfamily. In terms of assembly, component of the mitochondrial contact site and cristae organizing system (MICOS) complex, composed of at least MICOS10/MIC10, CHCHD3/MIC19, CHCHD6/MIC25, APOOL/MIC27, IMMT/MIC60, APOO/MIC23/MIC26 and MICOS13/MIC13. This complex was also known under the names MINOS or MitOS complex. The MICOS complex associates with mitochondrial outer membrane proteins SAMM50, MTX1 and MTX2 (together described as components of the mitochondrial outer membrane sorting assembly machinery (SAM) complex) and DNAJC11, mitochondrial inner membrane protein TMEM11 and with HSPA9. The MICOS and SAM complexes together with DNAJC11 are part of a large protein complex spanning both membranes termed the mitochondrial intermembrane space bridging (MIB) complex. Interacts with HSPA1A/HSPA1B and OPA1, preferentially with the soluble OPA1 form. Interacts with IMMT/MIC60. (Microbial infection) Interacts with human cytomegalovirus protein UL13; this interaction alters cristae architecture. Detected at low levels in brain, placenta, lung, liver, kidney and pancreas with increased levels in heart and skeletal muscle. Higher expression in primary lung cancers than in normal lung tissue.

It is found in the mitochondrion inner membrane. The protein resides in the cytoplasm. The protein localises to the nucleus. Its subcellular location is the mitochondrion. Component of the MICOS complex, a large protein complex of the mitochondrial inner membrane that plays crucial roles in the maintenance of crista junctions, inner membrane architecture, and formation of contact sites to the outer membrane. Plays an important role in the maintenance of the MICOS complex stability and the mitochondrial cristae morphology. Has also been shown to function as a transcription factor which binds to the BAG1 promoter and represses BAG1 transcription. This is MICOS complex subunit MIC19 (CHCHD3) from Homo sapiens (Human).